The sequence spans 194 residues: uncharacterized protein (194 aa).

Residues 6-66 (EFDTALVLHR…SAVKSYLEGK (61 aa)) form the HTH tetR-type domain. Positions 29–48 (SLQDLLSHLGIARQSLYDTY) form a DNA-binding region, H-T-H motif.

This is an uncharacterized protein from Bacillus subtilis (strain 168).